A 102-amino-acid chain; its full sequence is Caroteno-chlorophyll a-c-binding protein (102 aa).

Positions 36 and 39 each coordinate chlorophyll a. The helical transmembrane segment at 78–98 (VLGLIKIVPAGLWGIMIFYAA) threads the bilayer.

The protein belongs to the light-harvesting chlorophyll a/b-binding (LHC) protein family. As to quaternary structure, the LHC complex consists of chlorophyll a-b binding proteins. Binds at least 14 chlorophylls (8 Chl-a and 6 Chl-b) and carotenoids such as lutein and neoxanthin. is required as a cofactor. In terms of processing, photoregulated by reversible phosphorylation of its threonine residues.

The protein resides in the plastid. Its subcellular location is the chloroplast thylakoid membrane. The light-harvesting complex (LHC) functions as a light receptor, it captures and delivers excitation energy to photosystems with which it is closely associated. The polypeptide is Caroteno-chlorophyll a-c-binding protein (Amphidinium carterae (Dinoflagellate)).